We begin with the raw amino-acid sequence, 507 residues long: MFS-type transporter acdC (507 aa).

Positions 1–50 (MSPNAPAVDIGAAPSLDTPEGDTKQPAEDHVEKDSNLVDWDGPDDPEHPQ) are disordered. Positions 21-36 (GDTKQPAEDHVEKDSN) are enriched in basic and acidic residues. Asn-51 carries an N-linked (GlcNAc...) asparagine glycan. Residues 58–78 (WGITFSLASMTMWITFSSSVL) traverse the membrane as a helical segment. Asn-90 carries an N-linked (GlcNAc...) asparagine glycan. Helical transmembrane passes span 95–115 (VMPLATTLVIFGFALGPLCWA), 125–145 (LPTFLGYGVFAIFQVPVAVAP), 155–175 (FFVGVFGSSALSVGPGVMADI), 186–206 (PFFFAANLLGPILGPIIGGFI), and 215–235 (WTAWLTLITSIFFGVLALLIV). An N-linked (GlcNAc...) asparagine glycan is attached at Asn-257. The next 6 membrane-spanning stretches (helical) occupy residues 290–310 (PILICFTVYLSLIYGILYLFL), 328–348 (IAGLPFLGILVGMVLGIGIII), 371–391 (LVEMMLTSITMPIGLFWFGWA), 395–415 (HWMVQTIAGVPLGIGLFVLFM), 442–462 (FLGGSFPLFATAMYHNLGVDW), and 466–486 (ILGFISVAMVPIPFAFYIFGA).

It belongs to the major facilitator superfamily. CAR1 family.

The protein resides in the membrane. In terms of biological role, MFS-type transporter; part of the gene cluster that mediates the biosynthesis of aspcandine, a pyrrolobenzazepine alkaloid. The polypeptide is MFS-type transporter acdC (Aspergillus candidus).